Reading from the N-terminus, the 506-residue chain is Glycerol kinase (506 aa).

Residue Thr11 coordinates ADP. ATP contacts are provided by Thr11, Ser12, and Ser13. Sn-glycerol 3-phosphate is bound at residue Thr11. Arg15 is a binding site for ADP. 4 residues coordinate sn-glycerol 3-phosphate: Arg81, Glu82, Tyr133, and Asp242. Positions 81, 82, 133, 242, and 243 each coordinate glycerol. Positions 264 and 316 each coordinate ADP. ATP is bound by residues Thr264, Gly316, Gln320, and Gly421. ADP-binding residues include Gly421 and Asn425.

The protein belongs to the FGGY kinase family.

It carries out the reaction glycerol + ATP = sn-glycerol 3-phosphate + ADP + H(+). The protein operates within polyol metabolism; glycerol degradation via glycerol kinase pathway; sn-glycerol 3-phosphate from glycerol: step 1/1. Inhibited by fructose 1,6-bisphosphate (FBP). Functionally, key enzyme in the regulation of glycerol uptake and metabolism. Catalyzes the phosphorylation of glycerol to yield sn-glycerol 3-phosphate. The chain is Glycerol kinase from Paracidovorax citrulli (strain AAC00-1) (Acidovorax citrulli).